The following is a 449-amino-acid chain: Heterogeneous nuclear ribonucleoprotein H (449 aa).

An N-acetylmethionine modification is found at M1. N-acetylmethionine; in Heterogeneous nuclear ribonucleoprotein H, N-terminally processed is present on M2. The RRM 1 domain occupies 11-90; it reads FVVKVRGLPW…RYVEVFKSNN (80 aa). At S23 the chain carries Phosphoserine. A Glycyl lysine isopeptide (Lys-Gly) (interchain with G-Cter in SUMO2) cross-link involves residue K35. Phosphoserine is present on residues S54 and S63. Residues K87 and K98 each participate in a glycyl lysine isopeptide (Lys-Gly) (interchain with G-Cter in SUMO2) cross-link. The RRM 2 domain occupies 111–188; sequence GFVRLRGLPF…RYIEIFKSSR (78 aa). Position 233 is a dimethylated arginine; alternate (R233). R233 carries the omega-N-methylarginine; alternate modification. A 1-1 repeat occupies 234 to 249; sequence GAYGGGYGGYDDYNGY. Residues 234 to 433 form a 2 X 16 AA Gly-rich approximate repeats region; the sequence is GAYGGGYGGY…YGGQSSMSGY (200 aa). Y246 carries the phosphotyrosine modification. In terms of domain architecture, RRM 3 spans 289–364; sequence HCVHMRGLPY…RYVELFLNST (76 aa). S310 bears the Phosphoserine mark. 3 tandem repeats follow at residues 354-372, 374-392, and 418-433. Positions 354–392 are 2 X 19 AA perfect repeats; that stretch reads HRYVELFLNSTAGASGGAYEHRYVELFLNSTAGASGGAY.

Part of a ternary complex containing FUBP2, PTBP1, PTBP2 and HNRNPH1. Identified in the spliceosome C complex. Interacts with IGF2BP1. Interacts with CUGBP1; the interaction is RNA-dependent. Interacts with MBNL1; the interaction in RNA-independent.

The protein resides in the nucleus. It localises to the nucleoplasm. Functionally, this protein is a component of the heterogeneous nuclear ribonucleoprotein (hnRNP) complexes which provide the substrate for the processing events that pre-mRNAs undergo before becoming functional, translatable mRNAs in the cytoplasm. Mediates pre-mRNA alternative splicing regulation. Inhibits, together with CUGBP1, insulin receptor (IR) pre-mRNA exon 11 inclusion in myoblast. Binds to the IR RNA. Binds poly(RG). The protein is Heterogeneous nuclear ribonucleoprotein H (Hnrnph1) of Mus musculus (Mouse).